A 373-amino-acid polypeptide reads, in one-letter code: Probable pectin lyase C (373 aa).

An N-terminal signal peptide occupies residues 1–18 (MKVPFLQLLCLNAALASA). Cystine bridges form between Cys-81/Cys-100 and Cys-90/Cys-220. An N-linked (GlcNAc...) asparagine glycan is attached at Asn-123. Arg-250 is an active-site residue. Cys-316 and Cys-324 are disulfide-bonded.

This sequence belongs to the polysaccharide lyase 1 family.

The protein localises to the secreted. The catalysed reaction is Eliminative cleavage of (1-&gt;4)-alpha-D-galacturonan methyl ester to give oligosaccharides with 4-deoxy-6-O-methyl-alpha-D-galact-4-enuronosyl groups at their non-reducing ends.. In terms of biological role, pectinolytic enzymes consist of four classes of enzymes: pectin lyase, polygalacturonase, pectin methylesterase and rhamnogalacturonase. Among pectinolytic enzymes, pectin lyase is the most important in depolymerization of pectin, since it cleaves internal glycosidic bonds of highly methylated pectins. The protein is Probable pectin lyase C (pelC) of Aspergillus niger (strain ATCC MYA-4892 / CBS 513.88 / FGSC A1513).